A 228-amino-acid polypeptide reads, in one-letter code: HTH-type transcriptional regulator ArcR (228 aa).

22 to 141 is a binding site for a nucleoside 3',5'-cyclic phosphate; that stretch reads SYINIPVGVL…VKLFSLLSET (120 aa). The 74-residue stretch at 155-228 folds into the HTH crp-type domain; it reads KLAKERVTKI…SKNWLVSKDL (74 aa). A DNA-binding region (H-T-H motif) is located at residues 188 to 207; sequence IQLLSDMAGISRETTSHIIN.

It is found in the cytoplasm. Its function is as follows. Positively regulates the expression of the arcABDCR operon under anaerobic conditions, thus playing an essential role in arginine catabolism. May also control the expression of genes encoding proteins which are involved in anaerobic metabolism. Can bind cyclic AMP. This is HTH-type transcriptional regulator ArcR (arcR) from Staphylococcus epidermidis (strain ATCC 35984 / DSM 28319 / BCRC 17069 / CCUG 31568 / BM 3577 / RP62A).